Reading from the N-terminus, the 293-residue chain is Small ribosomal subunit protein uS2 (293 aa).

Residues 265 to 293 form a disordered region; that stretch reads DGGDWAASSAPAPGGENWAEAQPAEGAKW.

The protein belongs to the universal ribosomal protein uS2 family. As to quaternary structure, component of the small ribosomal subunit. Mature ribosomes consist of a small (40S) and a large (60S) subunit. The 40S subunit contains about 33 different proteins and 1 molecule of RNA (18S). The 60S subunit contains about 49 different proteins and 3 molecules of RNA (25S, 5.8S and 5S). Interacts with rps21.

Its subcellular location is the cytoplasm. Required for the assembly and/or stability of the 40S ribosomal subunit. Required for the processing of the 20S rRNA-precursor to mature 18S rRNA in a late step of the maturation of 40S ribosomal subunits. This chain is Small ribosomal subunit protein uS2 (rps0), found in Emericella nidulans (strain FGSC A4 / ATCC 38163 / CBS 112.46 / NRRL 194 / M139) (Aspergillus nidulans).